The primary structure comprises 122 residues: uncharacterized protein (122 aa).

The next 3 membrane-spanning stretches (helical) occupy residues 21-40 (VWSW…SIAI), 57-77 (YTHM…CICI), and 94-114 (LLFS…YCIY).

The protein localises to the membrane. This is an uncharacterized protein from Saccharomyces cerevisiae (strain ATCC 204508 / S288c) (Baker's yeast).